Reading from the N-terminus, the 224-residue chain is Ribonuclease T (224 aa).

The segment covering 1-11 (MSEDLYEDDQD) has biased composition (acidic residues). A disordered region spans residues 1-20 (MSEDLYEDDQDSQVSSGSRH). Residues 32–206 (VVVDVETGGF…YDTEKTAELF (175 aa)) form the Exonuclease domain. Residues Asp-35, Glu-37, His-193, and Asp-198 each coordinate Mg(2+). His-193 (proton donor/acceptor) is an active-site residue.

The protein belongs to the RNase T family. Homodimer. Mg(2+) is required as a cofactor.

In terms of biological role, trims short 3' overhangs of a variety of RNA species, leaving a one or two nucleotide 3' overhang. Responsible for the end-turnover of tRNA: specifically removes the terminal AMP residue from uncharged tRNA (tRNA-C-C-A). Also appears to be involved in tRNA biosynthesis. The polypeptide is Ribonuclease T (Pseudomonas entomophila (strain L48)).